A 533-amino-acid polypeptide reads, in one-letter code: Probable protein kinase UbiB (533 aa).

Residues 24-44 (LILELPMLPWWLRLLGATLPW) form a helical membrane-spanning segment. Positions 126–494 (RFEREPLASA…WKGSRHDWLG (369 aa)) constitute a Protein kinase domain. Residues 132 to 140 (LASASVAQV) and K154 each bind ATP. The Proton acceptor role is filled by D289. The chain crosses the membrane as a helical span at residues 510–530 (LGQQLEAWPAWVMLAGGVFLI).

It belongs to the ABC1 family. UbiB subfamily.

It is found in the cell inner membrane. The protein operates within cofactor biosynthesis; ubiquinone biosynthesis [regulation]. Its function is as follows. Is probably a protein kinase regulator of UbiI activity which is involved in aerobic coenzyme Q (ubiquinone) biosynthesis. This Pseudomonas aeruginosa (strain UCBPP-PA14) protein is Probable protein kinase UbiB.